Reading from the N-terminus, the 410-residue chain is Caspase-1 (410 aa).

The region spanning 1 to 91 (MADKVLKGKR…HLAETLGLSS (91 aa)) is the CARD domain. Residues 1-119 (MADKVLKGKR…PLPASVNNMP (119 aa)) constitute a propeptide that is removed on maturation. The span at 88-104 (GLSSSPQSGNSQNTTDS) shows a compositional bias: polar residues. A disordered region spans residues 88-125 (GLSSSPQSGNSQNTTDSEVAFPPLPASVNNMPGPAEPE). Catalysis depends on residues H235 and C284. A propeptide spanning residues 297–322 (SPAAPMDSTSQMGSSLSQVGDNLEDD) is cleaved from the precursor.

Belongs to the peptidase C14A family. In terms of assembly, heterotetramer that consists of two anti-parallel arranged heterodimers, each one formed by a 20 kDa (Caspase-1 subunit p20) and a 10 kDa (Caspase-1 subunit p10) subunit. May be a component of the inflammasome, a protein complex which also includes PYCARD, CARD8 and NLRP2 and whose function would be the activation of pro-inflammatory caspases. Component of the AIM2 PANoptosome complex, a multiprotein complex that drives inflammatory cell death (PANoptosis). Both the p10 and p20 subunits interact with MEFV. Interacts with CARD17P/INCA and CARD18. Interacts with SERPINB1; this interaction regulates CASP1 activity. As to quaternary structure, heterotetramer that consists of two anti-parallel arranged heterodimers, each one formed by a 20 kDa (Caspase-1 subunit p20) and a 10 kDa (Caspase-1 subunit p10) subunit. The two subunits are derived from the precursor sequence by an autocatalytic mechanism. In terms of processing, ubiquitinated via 'Lys-11'-linked polyubiquitination. Deubiquitinated by USP8.

The protein localises to the cytoplasm. It localises to the cell membrane. The catalysed reaction is Strict requirement for an Asp residue at position P1 and has a preferred cleavage sequence of Tyr-Val-Ala-Asp-|-.. In terms of biological role, thiol protease involved in a variety of inflammatory processes by proteolytically cleaving other proteins, such as the precursors of the inflammatory cytokines interleukin-1 beta (IL1B) and interleukin 18 (IL18) as well as the pyroptosis inducer Gasdermin-D (GSDMD), into active mature peptides. Plays a key role in cell immunity as an inflammatory response initiator: once activated through formation of an inflammasome complex, it initiates a pro-inflammatory response through the cleavage of the two inflammatory cytokines IL1B and IL18, releasing the mature cytokines which are involved in a variety of inflammatory processes. Cleaves a tetrapeptide after an Asp residue at position P1. Also initiates pyroptosis, a programmed lytic cell death pathway, through cleavage of GSDMD. In contrast to cleavage of interleukin IL1B, recognition and cleavage of GSDMD is not strictly dependent on the consensus cleavage site but depends on an exosite interface on CASP1 that recognizes and binds the Gasdermin-D, C-terminal (GSDMD-CT) part. Cleaves and activates CASP7 in response to bacterial infection, promoting plasma membrane repair. Upon inflammasome activation, during DNA virus infection but not RNA virus challenge, controls antiviral immunity through the cleavage of CGAS, rendering it inactive. In apoptotic cells, cleaves SPHK2 which is released from cells and remains enzymatically active extracellularly. The sequence is that of Caspase-1 (CASP1) from Felis catus (Cat).